The following is a 2096-amino-acid chain: HEAT repeat-containing protein 1 homolog (2096 aa).

The HEAT repeat unit spans residues 2058–2096 (TVPFIAELLEDEHQRVEKNTRTGVQELETILGESVQKYL).

This sequence belongs to the HEATR1/UTP10 family. As to quaternary structure, part of the small subunit (SSU) processome, composed of more than 70 proteins and the RNA chaperone small nucleolar RNA (snoRNA) U3. Interacts with MYC; the interaction is required for localization of MYC to the nucleolus.

The protein localises to the nucleus. It is found in the nucleolus. Its function is as follows. Ribosome biogenesis factor; required for recruitment of Myc to nucleoli. Involved in nucleolar processing of pre-18S ribosomal RNA. Required for optimal pre-ribosomal RNA transcription by RNA polymerase I. Part of the small subunit (SSU) processome, first precursor of the small eukaryotic ribosomal subunit. During the assembly of the SSU processome in the nucleolus, many ribosome biogenesis factors, an RNA chaperone and ribosomal proteins associate with the nascent pre-rRNA and work in concert to generate RNA folding, modifications, rearrangements and cleavage as well as targeted degradation of pre-ribosomal RNA by the RNA exosome. Involved in neuronal-lineage cell proliferation during larval development. The polypeptide is HEAT repeat-containing protein 1 homolog (Drosophila melanogaster (Fruit fly)).